A 701-amino-acid chain; its full sequence is MADLLFEIGAEEIPAGFVPGALRQLEDDLAKALADARLAHGEVRSVGTPRRLAVWARDVAPKQTDARTEAFGPPVAQAYDAEGKPTPAATGFARSQGVEVSALVRAQTPKGERVAVTKVEKGRRAEQVLPALLERLVGGLRFRKAMRSRFDEATFARPVRWMVALLGGRPLKVRHGEVTSGKVTYGHRFLAPKAIALKGTPDDYLAKLRRAHVLADPVERRAALLAELARAGKEAAGKVREDPALVEQVLYLVEEPTAVVGEFEKSNLELPPEVVISEMRNHQRYFAVVDGKGRLKNRFVAVSATRVKDPAVARHGYERVLRARLADARFFFEEDRKRKLHERIEDLGRRTFQAKLGSELDRAQRIGAVASALARALGKDALVADLLEASRLAKVDLNTGMVGEFPELQGTMGAHYARLEGLKPEIADAIEDHYKPIGAAEELPRSDLGALVAVADRLHSLVGIIGVGEKATGAADPFGLRRAAIGILRIVIARGYHLSLAAAVEQTLDALSGVKLAAGRALVAEQVLDFLRGRVRAAWTERFDADLVEAVLAAGSDDVVDARRRLEALADAKARPDFGSLAVAFKRVANIQEKAGGSGAAAVDPALLRDAAEKDLLAALEKVEQEVVARRAARDYPAVLRTVATLEPAVARFFDGVLVMAEDPALRANRLGLMRRVAALFSDLADFRKIQAEAPAQARAG.

Belongs to the class-II aminoacyl-tRNA synthetase family. In terms of assembly, tetramer of two alpha and two beta subunits.

The protein localises to the cytoplasm. The catalysed reaction is tRNA(Gly) + glycine + ATP = glycyl-tRNA(Gly) + AMP + diphosphate. The protein is Glycine--tRNA ligase beta subunit of Anaeromyxobacter sp. (strain K).